We begin with the raw amino-acid sequence, 65 residues long: MAKKGTRVVVTLECTECRTVPPSEKRSPGVSRYTTEKNRRNTTERLELKKFCPQLNKMTIHKEIK.

The segment at 20 to 40 is disordered; sequence VPPSEKRSPGVSRYTTEKNRR.

Belongs to the bacterial ribosomal protein bL33 family.

The polypeptide is Large ribosomal subunit protein bL33 (Prochlorococcus marinus (strain MIT 9211)).